Consider the following 232-residue polypeptide: MAQSVSLSTIASPILSQKPGSSVKSTPPCMASFPLRRQLPRLGLRNVRAQAGGDGDNKDNSVEVHRVNKDDQGTAVERKPRRSSIDISPFGLLDPWSPMRSMRQMLDTMDRIFEDAITIPGRNIGGGEIRVPWEIKDEEHEIRMRFDMPGVSKEDVKVSVEDDVLVIKSDHREENGGEDCWSRKSYSCYDTRLKLPDNCEKEKVKAELKDGVLYITIPKTKIERTVIDVQIQ.

Positions 1–25 (MAQSVSLSTIASPILSQKPGSSVKS) are enriched in polar residues. Disordered regions lie at residues 1-35 (MAQSVSLSTIASPILSQKPGSSVKSTPPCMASFPL) and 48-81 (RAQAGGDGDNKDNSVEVHRVNKDDQGTAVERKPR). The transit peptide at 1 to 46 (MAQSVSLSTIASPILSQKPGSSVKSTPPCMASFPLRRQLPRLGLRN) directs the protein to the chloroplast. The segment covering 55–78 (GDNKDNSVEVHRVNKDDQGTAVER) has biased composition (basic and acidic residues). The sHSP domain maps to 124-232 (IGGGEIRVPW…ERTVIDVQIQ (109 aa)).

Belongs to the small heat shock protein (HSP20) family.

It is found in the plastid. It localises to the chloroplast. The polypeptide is Small heat shock protein, chloroplastic (HSP21) (Pisum sativum (Garden pea)).